The sequence spans 85 residues: Putative membrane protein insertion efficiency factor (85 aa).

A disordered region spans residues 66-85 (PLNSGGDDPVPPKLDDNREH).

It belongs to the UPF0161 family.

The protein localises to the cell inner membrane. In terms of biological role, could be involved in insertion of integral membrane proteins into the membrane. The sequence is that of Putative membrane protein insertion efficiency factor from Yersinia pestis bv. Antiqua (strain Antiqua).